The primary structure comprises 45 residues: uncharacterized protein (45 aa).

Residues 15-37 traverse the membrane as a helical segment; it reads EVVGTLMAVLITFALVAVVFNFI.

The protein resides in the membrane. This is an uncharacterized protein from Archaeoglobus fulgidus (strain ATCC 49558 / DSM 4304 / JCM 9628 / NBRC 100126 / VC-16).